Reading from the N-terminus, the 293-residue chain is Fructokinase (293 aa).

Residue Thr-133 participates in ATP binding. Zn(2+)-binding residues include His-156, Cys-174, His-177, and Cys-180. ATP-binding positions include Pro-188 and 236 to 240 (GVMAQ).

The protein belongs to the ROK (NagC/XylR) family. Mg(2+) serves as cofactor.

The catalysed reaction is D-fructose + ATP = D-fructose 6-phosphate + ADP + H(+). Inhibition by zinc ions. The polypeptide is Fructokinase (scrK) (Streptococcus mutans serotype c (strain ATCC 700610 / UA159)).